We begin with the raw amino-acid sequence, 136 residues long: MLQPKRMKFRKMFKGRNRGLANGTEVSFGEFGLKAVGRGRLTARQIESARRAMTRHIKRQGQIWIRVFPDKPITSKPLEVRMGKGKGNVEYWVCQIQPGKVLYEMNGVSEELAREAFALAAAKLPLKTTFVTKTVM.

This sequence belongs to the universal ribosomal protein uL16 family. In terms of assembly, part of the 50S ribosomal subunit.

In terms of biological role, binds 23S rRNA and is also seen to make contacts with the A and possibly P site tRNAs. The sequence is that of Large ribosomal subunit protein uL16 from Shewanella piezotolerans (strain WP3 / JCM 13877).